Here is a 245-residue protein sequence, read N- to C-terminus: Sugar fermentation stimulation protein homolog (245 aa).

Belongs to the SfsA family.

The sequence is that of Sugar fermentation stimulation protein homolog from Yersinia pestis bv. Antiqua (strain Nepal516).